Here is a 568-residue protein sequence, read N- to C-terminus: 2-succinyl-5-enolpyruvyl-6-hydroxy-3-cyclohexene-1-carboxylate synthase (568 aa).

This sequence belongs to the TPP enzyme family. MenD subfamily. In terms of assembly, homodimer. Mg(2+) is required as a cofactor. Requires Mn(2+) as cofactor. Thiamine diphosphate serves as cofactor.

It catalyses the reaction isochorismate + 2-oxoglutarate + H(+) = 5-enolpyruvoyl-6-hydroxy-2-succinyl-cyclohex-3-ene-1-carboxylate + CO2. It participates in quinol/quinone metabolism; 1,4-dihydroxy-2-naphthoate biosynthesis; 1,4-dihydroxy-2-naphthoate from chorismate: step 2/7. Its pathway is quinol/quinone metabolism; menaquinone biosynthesis. Catalyzes the thiamine diphosphate-dependent decarboxylation of 2-oxoglutarate and the subsequent addition of the resulting succinic semialdehyde-thiamine pyrophosphate anion to isochorismate to yield 2-succinyl-5-enolpyruvyl-6-hydroxy-3-cyclohexene-1-carboxylate (SEPHCHC). This is 2-succinyl-5-enolpyruvyl-6-hydroxy-3-cyclohexene-1-carboxylate synthase from Histophilus somni (strain 2336) (Haemophilus somnus).